The sequence spans 263 residues: Fructose-bisphosphate aldolase class 1 (263 aa).

Lysine 177 (schiff-base intermediate with dihydroxyacetone-P) is an active-site residue.

This sequence belongs to the DeoC/FbaB aldolase family.

The enzyme catalyses beta-D-fructose 1,6-bisphosphate = D-glyceraldehyde 3-phosphate + dihydroxyacetone phosphate. Has aldolase activity with fructose 1,6-bisphosphate. May play a role in the biosynthesis of aromatic amino acids (AroAA). This Halobacterium salinarum (strain ATCC 29341 / DSM 671 / R1) protein is Fructose-bisphosphate aldolase class 1 (fba1).